The chain runs to 526 residues: MLAKGLCLRSVLVKSCQPFLSPVWQGPGLATGNGAGISSTNSPRSFNEIPSPGDNGWINLYHFLRENGTHRIHYHHMQNFQKYGPIYREKLGNMESVYILDPKDAATLFSCEGPNPERYLVPPWVAYHQYYQRPIGVLFKSSDAWRKDRIVLNQEVMAPDSIKNFVPLLEGVAQDFIKVLHRRIKQQNSGKFSGDISDDLFRFAFESITSVVFGERLGMLEEIVDPESQRFIDAVYQMFHTSVPMLNMPPDLFRLFRTKTWKDHAAAWDVIFSKADEYTQNFYWDLRQKRDFSKYPGVLYSLLGGNKLPFKNIQANITEMLAGGVDTTSMTLQWNLYEMAHNLKVQEMLRAEVLAARRQAQGDMAKMVQLVPLLKASIKETLRLHPISVTLQRYIVNDLVLRNYKIPAKTLVQVASYAMGRESSFFPNPNKFDPTRWLEKSQNTTHFRYLGFGWGVRQCLGRRIAELEMTIFLINVLENFRIEVQSIRDVGTKFNLILMPEKPIFFNFQPLKQDLGSTMPRKGDTV.

The N-terminal 36 residues, 1–36 (MLAKGLCLRSVLVKSCQPFLSPVWQGPGLATGNGAG), are a transit peptide targeting the mitochondrion. A heme-binding site is contributed by Cys459.

The protein belongs to the cytochrome P450 family. Interacts with FDX1/adrenodoxin. The cofactor is heme. In terms of tissue distribution, expressed in the kidney where it localizes to the distal convoluted tubule and the thick ascending limb of the loop of Henle (at protein level). In the ovary, highly expressed in interstitial cells (at protein level). Also expressed in adrenal gland and testis.

It localises to the mitochondrion inner membrane. The catalysed reaction is 6 reduced [adrenodoxin] + cholesterol + 3 O2 + 6 H(+) = 4-methylpentanal + pregnenolone + 6 oxidized [adrenodoxin] + 4 H2O. It carries out the reaction 2 reduced [adrenodoxin] + cholesterol + O2 + 2 H(+) = (22R)-hydroxycholesterol + 2 oxidized [adrenodoxin] + H2O. It catalyses the reaction (22R)-hydroxycholesterol + 2 reduced [adrenodoxin] + O2 + 2 H(+) = (20R,22R)-20,22-dihydroxycholesterol + 2 oxidized [adrenodoxin] + H2O. The enzyme catalyses (20R,22R)-20,22-dihydroxycholesterol + 2 reduced [adrenodoxin] + O2 + 2 H(+) = 4-methylpentanal + pregnenolone + 2 oxidized [adrenodoxin] + 2 H2O. The protein operates within lipid metabolism; C21-steroid hormone metabolism. It functions in the pathway steroid metabolism; cholesterol metabolism. Its function is as follows. A cytochrome P450 monooxygenase that catalyzes the side-chain hydroxylation and cleavage of cholesterol to pregnenolone, the precursor of most steroid hormones. Catalyzes three sequential oxidation reactions of cholesterol, namely the hydroxylation at C22 followed with the hydroxylation at C20 to yield 20R,22R-hydroxycholesterol that is further cleaved between C20 and C22 to yield the C21-steroid pregnenolone and 4-methylpentanal. Mechanistically, uses molecular oxygen inserting one oxygen atom into a substrate and reducing the second into a water molecule. Two electrons are provided by NADPH via a two-protein mitochondrial transfer system comprising flavoprotein FDXR (adrenodoxin/ferredoxin reductase) and nonheme iron-sulfur protein FDX1 or FDX2 (adrenodoxin/ferredoxin). This chain is Cholesterol side-chain cleavage enzyme, mitochondrial, found in Rattus norvegicus (Rat).